The chain runs to 370 residues: Peptide chain release factor 2 (370 aa).

Glutamine 249 bears the N5-methylglutamine mark.

The protein belongs to the prokaryotic/mitochondrial release factor family. Post-translationally, methylated by PrmC. Methylation increases the termination efficiency of RF2.

The protein localises to the cytoplasm. Functionally, peptide chain release factor 2 directs the termination of translation in response to the peptide chain termination codons UGA and UAA. The protein is Peptide chain release factor 2 of Kosmotoga olearia (strain ATCC BAA-1733 / DSM 21960 / TBF 19.5.1).